Reading from the N-terminus, the 406-residue chain is O-succinylhomoserine sulfhydrylase (406 aa).

Lys-219 bears the N6-(pyridoxal phosphate)lysine mark.

The protein belongs to the trans-sulfuration enzymes family. MetZ subfamily. Homotetramer. Requires pyridoxal 5'-phosphate as cofactor.

The catalysed reaction is O-succinyl-L-homoserine + hydrogen sulfide = L-homocysteine + succinate. The protein operates within amino-acid biosynthesis; L-methionine biosynthesis via de novo pathway; L-homocysteine from O-succinyl-L-homoserine: step 1/1. Catalyzes the formation of L-homocysteine from O-succinyl-L-homoserine (OSHS) and hydrogen sulfide. The protein is O-succinylhomoserine sulfhydrylase of Mycobacterium tuberculosis (strain CDC 1551 / Oshkosh).